Reading from the N-terminus, the 224-residue chain is Oxalate oxidase 2 (224 aa).

The signal sequence occupies residues 1–23 (MGYSKTLAVSLFAVLLLAPAVLA). A disulfide bridge links cysteine 33 with cysteine 49. In terms of domain architecture, Cupin type-1 spans 63-214 (SKLAKAGNTS…ALRVEAGVVE (152 aa)). Asparagine 70 and asparagine 75 each carry an N-linked (GlcNAc...) asparagine glycan. Residues histidine 111, histidine 113, glutamate 118, and histidine 160 each coordinate Mn(2+).

It belongs to the germin family. As to quaternary structure, oligomer (believed to be a pentamer but probably hexamer). Glycosylated. A form called G contains antennary GlcNAc residues, whereas a form called G' lacks antennary GlcNAc residues in its otherwise identical glycans. Root.

It localises to the secreted. Its subcellular location is the extracellular space. The protein localises to the apoplast. It is found in the cell wall. It carries out the reaction oxalate + O2 + 2 H(+) = H2O2 + 2 CO2. Its function is as follows. Releases hydrogen peroxide in the apoplast. May play an important role in several aspects of plant growth and defense mechanisms. The chain is Oxalate oxidase 2 from Hordeum vulgare (Barley).